We begin with the raw amino-acid sequence, 293 residues long: Small ribosomal subunit biogenesis GTPase RsgA (293 aa).

The CP-type G domain occupies 63–223 (KNELVRPPIA…VADTPGFSSL (161 aa)). GTP is bound by residues 112 to 115 (SKMD) and 166 to 174 (GQSGVGKSS). Zn(2+) contacts are provided by C247, C252, H254, and C260.

This sequence belongs to the TRAFAC class YlqF/YawG GTPase family. RsgA subfamily. In terms of assembly, monomer. Associates with 30S ribosomal subunit, binds 16S rRNA. Zn(2+) serves as cofactor.

It is found in the cytoplasm. In terms of biological role, one of several proteins that assist in the late maturation steps of the functional core of the 30S ribosomal subunit. Helps release RbfA from mature subunits. May play a role in the assembly of ribosomal proteins into the subunit. Circularly permuted GTPase that catalyzes slow GTP hydrolysis, GTPase activity is stimulated by the 30S ribosomal subunit. This Bacillus anthracis protein is Small ribosomal subunit biogenesis GTPase RsgA.